The following is a 193-amino-acid chain: Xanthine phosphoribosyltransferase (193 aa).

Positions 20 and 27 each coordinate xanthine. A 5-phospho-alpha-D-ribose 1-diphosphate-binding site is contributed by 128-132; it reads ANGQA. Position 156 (lysine 156) interacts with xanthine.

This sequence belongs to the purine/pyrimidine phosphoribosyltransferase family. Xpt subfamily. In terms of assembly, homodimer.

The protein resides in the cytoplasm. It catalyses the reaction XMP + diphosphate = xanthine + 5-phospho-alpha-D-ribose 1-diphosphate. It participates in purine metabolism; XMP biosynthesis via salvage pathway; XMP from xanthine: step 1/1. Functionally, converts the preformed base xanthine, a product of nucleic acid breakdown, to xanthosine 5'-monophosphate (XMP), so it can be reused for RNA or DNA synthesis. The protein is Xanthine phosphoribosyltransferase of Streptococcus pneumoniae serotype 2 (strain D39 / NCTC 7466).